Consider the following 334-residue polypeptide: Isopentenyl-diphosphate delta-isomerase (334 aa).

A substrate-binding site is contributed by 5–6; it reads RK. FMN is bound by residues 60 to 62, serine 90, and asparagine 117; that span reads AMT. Glutamine 147 is a binding site for substrate. Mg(2+) is bound at residue glutamate 148. FMN-binding positions include lysine 179, serine 204, threonine 209, 253–255, and 274–275; these read GVR and SR.

This sequence belongs to the IPP isomerase type 2 family. In terms of assembly, homooctamer. Dimer of tetramers. FMN serves as cofactor. NADPH is required as a cofactor. It depends on Mg(2+) as a cofactor.

The protein localises to the cytoplasm. It catalyses the reaction isopentenyl diphosphate = dimethylallyl diphosphate. Functionally, involved in the biosynthesis of isoprenoids. Catalyzes the 1,3-allylic rearrangement of the homoallylic substrate isopentenyl (IPP) to its allylic isomer, dimethylallyl diphosphate (DMAPP). The polypeptide is Isopentenyl-diphosphate delta-isomerase (Streptococcus gordonii (strain Challis / ATCC 35105 / BCRC 15272 / CH1 / DL1 / V288)).